The sequence spans 219 residues: Thiamine-phosphate synthase (219 aa).

Residues 44-48 and asparagine 79 contribute to the 4-amino-2-methyl-5-(diphosphooxymethyl)pyrimidine site; that span reads QFREK. Mg(2+) contacts are provided by aspartate 80 and aspartate 99. Position 117 (serine 117) interacts with 4-amino-2-methyl-5-(diphosphooxymethyl)pyrimidine. 143-145 is a 2-[(2R,5Z)-2-carboxy-4-methylthiazol-5(2H)-ylidene]ethyl phosphate binding site; that stretch reads TST. Lysine 146 provides a ligand contact to 4-amino-2-methyl-5-(diphosphooxymethyl)pyrimidine. Residues glycine 175 and 195 to 196 contribute to the 2-[(2R,5Z)-2-carboxy-4-methylthiazol-5(2H)-ylidene]ethyl phosphate site; that span reads IS.

Belongs to the thiamine-phosphate synthase family. Mg(2+) is required as a cofactor.

It catalyses the reaction 2-[(2R,5Z)-2-carboxy-4-methylthiazol-5(2H)-ylidene]ethyl phosphate + 4-amino-2-methyl-5-(diphosphooxymethyl)pyrimidine + 2 H(+) = thiamine phosphate + CO2 + diphosphate. It carries out the reaction 2-(2-carboxy-4-methylthiazol-5-yl)ethyl phosphate + 4-amino-2-methyl-5-(diphosphooxymethyl)pyrimidine + 2 H(+) = thiamine phosphate + CO2 + diphosphate. The enzyme catalyses 4-methyl-5-(2-phosphooxyethyl)-thiazole + 4-amino-2-methyl-5-(diphosphooxymethyl)pyrimidine + H(+) = thiamine phosphate + diphosphate. It functions in the pathway cofactor biosynthesis; thiamine diphosphate biosynthesis; thiamine phosphate from 4-amino-2-methyl-5-diphosphomethylpyrimidine and 4-methyl-5-(2-phosphoethyl)-thiazole: step 1/1. In terms of biological role, condenses 4-methyl-5-(beta-hydroxyethyl)thiazole monophosphate (THZ-P) and 2-methyl-4-amino-5-hydroxymethyl pyrimidine pyrophosphate (HMP-PP) to form thiamine monophosphate (TMP). The polypeptide is Thiamine-phosphate synthase (Bacillus cereus (strain 03BB102)).